The sequence spans 425 residues: Transmembrane protein 184A (425 aa).

7 consecutive transmembrane segments (helical) span residues 51–71, 96–116, 133–153, 189–209, 226–246, 261–281, and 303–323; these read LFLT…TALL, LLFI…LLGG, FVIY…SAIM, TLQF…LQAF, VTLV…LFYF, FLTI…LAIL, and LAAG…SLAL. Residues 375-425 are disordered; the sequence is QYTQQSTHEAPGPGQGGHPSPSTHPGPASGSGGGKKSRNIEKRMLIPSEDL. Residues 392-402 show a composition bias toward low complexity; the sequence is HPSPSTHPGPA.

Belongs to the TMEM184 family. In terms of tissue distribution, expressed in vascular cells (at protein level).

It is found in the cell membrane. Its subcellular location is the cytoplasm. The protein localises to the perinuclear region. The protein resides in the early endosome membrane. It localises to the endosome. It is found in the cytoplasmic vesicle. Its subcellular location is the secretory vesicle membrane. The protein localises to the cytoplasmic vesicle membrane. In terms of biological role, acts as a heparin receptor in vascular cells. May be involved in vesicle transport in exocrine cells and Sertoli cells. This is Transmembrane protein 184A (Tmem184a) from Rattus norvegicus (Rat).